Reading from the N-terminus, the 495-residue chain is Transcription termination/antitermination protein NusA (495 aa).

Residues 135–200 (GEIITGVVKK…RGAQLFVTRS (66 aa)) enclose the S1 motif domain. Residues 302 to 368 (KHTMDIAVEA…FTKYLDIDED (67 aa)) form the KH domain. A run of 2 repeats spans residues 364-414 (DIDE…KNAL) and 439-489 (GVDR…RNIC). The tract at residues 364 to 489 (DIDEDFATVL…ALIMAARNIC (126 aa)) is 2 X 51 AA approximate repeats.

This sequence belongs to the NusA family. As to quaternary structure, monomer. Binds directly to the core enzyme of the DNA-dependent RNA polymerase and to nascent RNA.

The protein localises to the cytoplasm. Functionally, participates in both transcription termination and antitermination. The chain is Transcription termination/antitermination protein NusA from Shigella flexneri.